The chain runs to 202 residues: Putative pituitary tumor-transforming gene 3 protein (202 aa).

Positions 61–64 (RKAL) match the D-box motif. The disordered stretch occupies residues 67 to 92 (VNRATEKSVKTNGPLKQKQPSFSAKK). Residues 163–173 (PPLPLKMPSPP) carry the SH3-binding motif.

The protein belongs to the securin family.

It is found in the cytoplasm. Its subcellular location is the nucleus. This Pongo pygmaeus (Bornean orangutan) protein is Putative pituitary tumor-transforming gene 3 protein (PTTG3).